Consider the following 443-residue polypeptide: Probable lysophospholipase BODYGUARD 5 (443 aa).

Positions 1-52 (MITSSFSEKCTSVINGAPSWAVFFLFDLLDYFLCIVFRFLDEVMEEKSESCH) are cleaved as a signal peptide. A lipid anchor (N-palmitoyl cysteine) is attached at Cys53. The AB hydrolase-1 domain occupies 163–268 (VIFVHGFLAS…VKSVALVAPP (106 aa)). The active site involves His167. Ser242 functions as the Nucleophile in the catalytic mechanism. Active-site charge relay system residues include Asp387 and His415.

Its subcellular location is the cell membrane. It is found in the secreted. The protein resides in the cell wall. In terms of biological role, involved in cuticle development and morphogenesis. The protein is Probable lysophospholipase BODYGUARD 5 of Arabidopsis thaliana (Mouse-ear cress).